The following is a 442-amino-acid chain: Alpha-1,6-mannosyl-glycoprotein 2-beta-N-acetylglucosaminyltransferase (442 aa).

The Cytoplasmic segment spans residues 1–9 (MRFRIYKRK). The helical; Signal-anchor for type II membrane protein transmembrane segment at 10 to 29 (VLILTLVVAACGFVLWSSNG) threads the bilayer. At 30-442 (RQRKSDALGP…ELCKSYRRLQ (413 aa)) the chain is on the lumenal side. N-linked (GlcNAc...) asparagine glycosylation is found at N64 and N81. Residues 118-122 (QVHNR) and D149 each bind substrate. Residues C191 and C205 are joined by a disulfide bond. 224–228 (QTKHH) provides a ligand contact to substrate. Position 256 (D256) interacts with Mn(2+). A disulfide bridge links C278 with C281. R293 contacts substrate. 3 disulfides stabilise this stretch: C329-C352, C334-C435, and C373-C381. Position 369 (H369) interacts with Mn(2+).

Belongs to the glycosyltransferase 16 (GT16) protein family. In terms of assembly, homodimer. Mn(2+) is required as a cofactor. Detected in liver, lung, testis, kidney, brain, spleen, thymus, uterus and intestine.

The protein localises to the golgi apparatus membrane. It catalyses the reaction an N(4)-{beta-D-GlcNAc-(1-&gt;2)-alpha-D-Man-(1-&gt;3)-[alpha-D-Man-(1-&gt;6)]-beta-D-Man-(1-&gt;4)-beta-D-GlcNAc-(1-&gt;4)-beta-D-GlcNAc}-L-asparaginyl-[protein] + UDP-N-acetyl-alpha-D-glucosamine = N(4)-{beta-D-GlcNAc-(1-&gt;2)-alpha-D-Man-(1-&gt;3)-[beta-D-GlcNAc-(1-&gt;2)-alpha-D-Man-(1-&gt;6)]-beta-D-Man-(1-&gt;4)-beta-D-GlcNAc-(1-&gt;4)-beta-D-GlcNAc}-L-asparaginyl-[protein] + UDP + H(+). Its pathway is protein modification; protein glycosylation. In terms of biological role, plays an essential role in protein N-glycosylation. Catalyzes the transfer of N-acetylglucosamine (GlcNAc) onto the free terminal mannose moiety in the core structure of the nascent N-linked glycan chain, giving rise to the second branch in complex glycans. The sequence is that of Alpha-1,6-mannosyl-glycoprotein 2-beta-N-acetylglucosaminyltransferase (Mgat2) from Mus musculus (Mouse).